A 751-amino-acid chain; its full sequence is Leucine-rich repeat-containing protein 56 homolog (751 aa).

Residues 1-149 (MKKSTVLDAR…IDKSRDNGQL (149 aa)) are disordered. Residues 13-22 (GPLPRRPQQP) are compositionally biased toward pro residues. 2 stretches are compositionally biased toward polar residues: residues 28-39 (RNSSQVEKNNAR) and 60-87 (HSQS…NLNS). 5 LRR repeats span residues 210–235 (MPQL…NYAN), 236–256 (LRRL…GACA), 258–279 (VLEE…TEVS), 280–304 (STLQ…TLPQ), and 307–328 (KMKH…VELS). 3 disordered regions span residues 430-538 (SRSH…QRQQ), 645-698 (TCTH…EKDW), and 717-751 (EAAL…PVVF). 2 stretches are compositionally biased toward polar residues: residues 456–471 (KNSQ…TNQG) and 662–671 (QQEQPTTAGA). Positions 717–738 (EAALKERVQGSKEVDGGGLEKV) are enriched in basic and acidic residues. The segment covering 739–751 (ESEDEEDVSPVVF) has biased composition (acidic residues).

Belongs to the LRRC56 family.

It localises to the cell projection. The protein localises to the cilium. It is found in the flagellum. Its function is as follows. Required for the assembly of dynein arms in the distal portion of flagellum axoneme. In Trypanosoma brucei brucei (strain 927/4 GUTat10.1), this protein is Leucine-rich repeat-containing protein 56 homolog.